A 108-amino-acid polypeptide reads, in one-letter code: Cyclin-dependent protein kinase inhibitor SMR13 (108 aa).

In terms of biological role, probable cyclin-dependent protein kinase (CDK) inhibitor that functions as a repressor of mitosis in the endoreduplication cell cycle. In Arabidopsis thaliana (Mouse-ear cress), this protein is Cyclin-dependent protein kinase inhibitor SMR13.